The following is a 309-amino-acid chain: Ribonuclease Z (309 aa).

Residues histidine 63, histidine 65, aspartate 67, histidine 68, histidine 143, aspartate 213, and histidine 271 each contribute to the Zn(2+) site. Aspartate 67 serves as the catalytic Proton acceptor.

Belongs to the RNase Z family. Homodimer. It depends on Zn(2+) as a cofactor.

It carries out the reaction Endonucleolytic cleavage of RNA, removing extra 3' nucleotides from tRNA precursor, generating 3' termini of tRNAs. A 3'-hydroxy group is left at the tRNA terminus and a 5'-phosphoryl group is left at the trailer molecule.. Zinc phosphodiesterase, which displays some tRNA 3'-processing endonuclease activity. Probably involved in tRNA maturation, by removing a 3'-trailer from precursor tRNA. The protein is Ribonuclease Z of Phocaeicola vulgatus (strain ATCC 8482 / DSM 1447 / JCM 5826 / CCUG 4940 / NBRC 14291 / NCTC 11154) (Bacteroides vulgatus).